Here is a 293-residue protein sequence, read N- to C-terminus: Protease HtpX (293 aa).

A run of 2 helical transmembrane segments spans residues 4–24 (IALF…VLSL) and 34–54 (GLMI…LLMS). Histidine 139 contributes to the Zn(2+) binding site. Residue glutamate 140 is part of the active site. Histidine 143 is a binding site for Zn(2+). 2 helical membrane-spanning segments follow: residues 158–178 (IVNT…SGFL) and 193–213 (LVYF…ASII). Glutamate 222 contacts Zn(2+).

The protein belongs to the peptidase M48B family. It depends on Zn(2+) as a cofactor.

The protein localises to the cell inner membrane. The protein is Protease HtpX of Pectobacterium carotovorum subsp. carotovorum (strain PC1).